We begin with the raw amino-acid sequence, 384 residues long: Succinyl-diaminopimelate desuccinylase (384 aa).

Residue His71 coordinates Zn(2+). Asp73 is a catalytic residue. Asp104 provides a ligand contact to Zn(2+). The active-site Proton acceptor is Glu139. Residues Glu140, Glu168, and His357 each coordinate Zn(2+).

It belongs to the peptidase M20A family. DapE subfamily. In terms of assembly, homodimer. Requires Zn(2+) as cofactor. It depends on Co(2+) as a cofactor.

It carries out the reaction N-succinyl-(2S,6S)-2,6-diaminopimelate + H2O = (2S,6S)-2,6-diaminopimelate + succinate. It functions in the pathway amino-acid biosynthesis; L-lysine biosynthesis via DAP pathway; LL-2,6-diaminopimelate from (S)-tetrahydrodipicolinate (succinylase route): step 3/3. Catalyzes the hydrolysis of N-succinyl-L,L-diaminopimelic acid (SDAP), forming succinate and LL-2,6-diaminopimelate (DAP), an intermediate involved in the bacterial biosynthesis of lysine and meso-diaminopimelic acid, an essential component of bacterial cell walls. The protein is Succinyl-diaminopimelate desuccinylase of Afipia carboxidovorans (strain ATCC 49405 / DSM 1227 / KCTC 32145 / OM5) (Oligotropha carboxidovorans).